We begin with the raw amino-acid sequence, 483 residues long: Endoplasmic reticulum lectin 1 (483 aa).

The signal sequence occupies residues 1-33 (MEEGGGGVRSLVPGGPVLLVLCGLLEASGGGRA). MRH domains are found at residues 111–246 (SSCS…LCSH) and 342–469 (SYCF…ICKI). The cysteines at positions 113 and 126 are disulfide-linked. N-linked (GlcNAc...) asparagine glycosylation is present at asparagine 195. Disulfide bonds link cysteine 199-cysteine 232, cysteine 215-cysteine 244, cysteine 344-cysteine 357, cysteine 421-cysteine 455, and cysteine 436-cysteine 467.

May form a complex with OS9, HSPA5, SYVN1, and SEL1L with which it interacts directly. Interacts (via PRKCSH 2 domain) with KREMEN2 (when glycosylated). Interacts with HSPA5. Isoform 1 and isoform 2 are N-glycosylated.

The protein resides in the endoplasmic reticulum lumen. Its function is as follows. Probable lectin that binds selectively to improperly folded lumenal proteins. May function in endoplasmic reticulum quality control and endoplasmic reticulum-associated degradation (ERAD) of both non-glycosylated proteins and glycoproteins. The protein is Endoplasmic reticulum lectin 1 (ERLEC1) of Homo sapiens (Human).